The sequence spans 291 residues: Aspartate carbamoyltransferase catalytic subunit (291 aa).

Residues R47 and T48 each coordinate carbamoyl phosphate. L-aspartate is bound at residue K75. Carbamoyl phosphate contacts are provided by R97, H126, and Q129. Residues R159 and R213 each contribute to the L-aspartate site. The carbamoyl phosphate site is built by G251 and P252.

This sequence belongs to the aspartate/ornithine carbamoyltransferase superfamily. ATCase family. In terms of assembly, heterododecamer (2C3:3R2) of six catalytic PyrB chains organized as two trimers (C3), and six regulatory PyrI chains organized as three dimers (R2).

The enzyme catalyses carbamoyl phosphate + L-aspartate = N-carbamoyl-L-aspartate + phosphate + H(+). The protein operates within pyrimidine metabolism; UMP biosynthesis via de novo pathway; (S)-dihydroorotate from bicarbonate: step 2/3. Functionally, catalyzes the condensation of carbamoyl phosphate and aspartate to form carbamoyl aspartate and inorganic phosphate, the committed step in the de novo pyrimidine nucleotide biosynthesis pathway. The chain is Aspartate carbamoyltransferase catalytic subunit from Aquifex aeolicus (strain VF5).